The chain runs to 213 residues: Redox-sensing transcriptional repressor Rex (213 aa).

The segment at residues 17–56 (LYYRIFKRFYADQVEKASSKQIADAMGIDSATVRRDFSYF) is a DNA-binding region (H-T-H motif). NAD(+) is bound at residue 91 to 96 (GCGNIG).

Belongs to the transcriptional regulatory Rex family. Homodimer.

The protein localises to the cytoplasm. In terms of biological role, modulates transcription in response to changes in cellular NADH/NAD(+) redox state. The sequence is that of Redox-sensing transcriptional repressor Rex from Streptococcus uberis (strain ATCC BAA-854 / 0140J).